The sequence spans 1684 residues: Latrophilin Cirl (1684 aa).

Residues M1 to R765 lie on the Extracellular side of the membrane. An SUEL-type lectin domain is found at A21–V110. 4 N-linked (GlcNAc...) asparagine glycosylation sites follow: N138, N251, N297, and N336. The disordered stretch occupies residues P181–A300. Polar residues-rich tracts occupy residues S250–I260 and K278–A300. The disordered stretch occupies residues S370–S391. Positions T381–S391 are enriched in low complexity. N-linked (GlcNAc...) asparagine glycans are attached at residues N396, N653, N701, and N728. One can recognise a GAIN-B domain in the interval R559–H752. 2 cysteine pairs are disulfide-bonded: C707-C734 and C722-C736. Positions C707–H752 are GPS. A helical transmembrane segment spans residues I766 to L786. Topologically, residues K787 to T799 are cytoplasmic. The chain crosses the membrane as a helical span at residues S800–I820. The Extracellular segment spans residues E821–S826. The chain crosses the membrane as a helical span at residues I827–F847. Residues C848–V873 are Cytoplasmic-facing. The helical transmembrane segment at N874 to I894 threads the bilayer. Over N895 to F918 the chain is Extracellular. The chain crosses the membrane as a helical span at residues V919–I939. The Cytoplasmic segment spans residues M940–S966. Residues F967–A987 form a helical membrane-spanning segment. Residues K988–T994 lie on the Extracellular side of the membrane. A helical membrane pass occupies residues G995 to F1015. Topologically, residues H1016–K1684 are cytoplasmic. The segment at P1080–T1100 is disordered. Residues S1156, S1247, and S1254 each carry the phosphoserine modification. 4 disordered regions span residues K1228–R1255, K1270–P1353, S1441–Q1520, and S1587–L1669. Residues Q1298–L1314 show a composition bias toward low complexity. S1315 and S1316 each carry phosphoserine. Positions L1328 to L1348 are enriched in low complexity. Positions R1455–Q1466 are enriched in polar residues. Acidic residues-rich tracts occupy residues D1476–T1489 and C1499–D1512. A compositionally biased stretch (low complexity) spans Q1631–H1654.

It belongs to the G-protein coupled receptor 2 family. LN-TM7 subfamily. As to quaternary structure, forms a heterodimer, consisting of a large extracellular region non-covalently linked to a seven-transmembrane moiety. In terms of processing, proteolytically cleaved into 2 subunits, an extracellular subunit and a seven-transmembrane subunit.

The protein localises to the cell membrane. In Drosophila persimilis (Fruit fly), this protein is Latrophilin Cirl.